Here is an 859-residue protein sequence, read N- to C-terminus: Leucine--tRNA ligase (859 aa).

The 'HIGH' region motif lies at 42–52; sequence PYPSGRLHMGH. Residues 618–622 carry the 'KMSKS' region motif; that stretch reads KMSKS. Lys621 is a binding site for ATP.

This sequence belongs to the class-I aminoacyl-tRNA synthetase family.

It localises to the cytoplasm. The enzyme catalyses tRNA(Leu) + L-leucine + ATP = L-leucyl-tRNA(Leu) + AMP + diphosphate. This Shewanella baltica (strain OS223) protein is Leucine--tRNA ligase.